We begin with the raw amino-acid sequence, 342 residues long: Trans-3-hydroxy-L-proline dehydratase (342 aa).

The Proton acceptor role is filled by Ser90. Substrate-binding positions include 91–92, Asp251, and 256–257; these read GS and GT.

The protein belongs to the proline racemase family.

It catalyses the reaction trans-3-hydroxy-L-proline = 1-pyrroline-2-carboxylate + H2O. In terms of biological role, catalyzes the dehydration of trans-3-hydroxy-L-proline (t3LHyp) to Delta(1)-pyrroline-2-carboxylate (Pyr2C). Displays neither proline racemase activity nor 4-hydroxyproline 2-epimerase activity. The polypeptide is Trans-3-hydroxy-L-proline dehydratase (Brucella suis biovar 1 (strain 1330)).